Here is a 226-residue protein sequence, read N- to C-terminus: Aspartyl protease inhibitor (226 aa).

Positions 1-15 (MKLLFLCALIALTAA) are cleaved as a signal peptide. Disordered regions lie at residues 95–116 (GKKG…KKPS) and 196–218 (EAKQ…QPNV). C131 and C222 form a disulfide bridge.

This sequence belongs to the protease inhibitor I33 family.

It is found in the secreted. Aspartyl protease inhibitor. The sequence is that of Aspartyl protease inhibitor from Parelaphostrongylus tenuis (Meningeal worm).